Here is a 59-residue protein sequence, read N- to C-terminus: Conotoxin reg3.15 (59 aa).

The first 15 residues, 1 to 15, serve as a signal peptide directing secretion; the sequence is RVLLTICLLLFPLTA. A propeptide spanning residues 16–44 is cleaved from the precursor; it reads IPLGGDQPAERMRNVRSAVQDPRFDSVGW. Cystine bridges form between Cys-45–Cys-59, Cys-46–Cys-55, and Cys-51–Cys-58.

The protein belongs to the conotoxin M superfamily. As to expression, expressed by the venom duct.

It localises to the secreted. This chain is Conotoxin reg3.15, found in Conus regius (Crown cone).